A 567-amino-acid chain; its full sequence is Hexose transporter HXT9 (567 aa).

Residues 1–16 (MSGVNNTSANDLSTTE) are compositionally biased toward polar residues. A disordered region spans residues 1 to 45 (MSGVNNTSANDLSTTESNSNSVANAPSVKTEHNDSKNSLNLDATE). The Cytoplasmic segment spans residues 1-56 (MSGVNNTSANDLSTTESNSNSVANAPSVKTEHNDSKNSLNLDATEPPIDLPQKPLS). Residues 17 to 28 (SNSNSVANAPSV) show a composition bias toward low complexity. The chain crosses the membrane as a helical span at residues 57–77 (AYTTVAILCLMIAFGGFIFGW). The Extracellular portion of the chain corresponds to 78–112 (DTGTISGFVNLSDFIRRFGQKNDKGTYYLSKVRMG). N-linked (GlcNAc...) asparagine glycosylation is present at Asn-87. The chain crosses the membrane as a helical span at residues 113–133 (LIVSIFNIGCAIGGIVLSKVG). Over 134-139 (DIYGRR) the chain is Cytoplasmic. Residues 140-160 (IGLITVTAIYVVGILIQITSI) traverse the membrane as a helical segment. The Extracellular portion of the chain corresponds to 161 to 170 (NKWYQYFIGR). A helical membrane pass occupies residues 171-191 (IISGLGVGGIAVLSPMLISEV). Over 192-197 (APKQIR) the chain is Cytoplasmic. The chain crosses the membrane as a helical span at residues 198–218 (GTLVQLYQLMCTMGIFLGYCT). Residues 219-232 (NYGTKNYHNATQWR) lie on the Extracellular side of the membrane. N-linked (GlcNAc...) asparagine glycosylation is present at Asn-227. The helical transmembrane segment at 233-253 (VGLGLCFAWTTFMVSGMMFVP) threads the bilayer. At 254–336 (ESPRYLIEVG…IQSLQQLTGD (83 aa)) the chain is on the cytoplasmic side. A helical membrane pass occupies residues 337–353 (NYFFYYGTTIFKSVGLK). Residues 354 to 359 (DSFQTS) lie on the Extracellular side of the membrane. A helical membrane pass occupies residues 360 to 377 (IIIGVVNFFSSFIAVYTI). Over 378 to 384 (ERFGRRT) the chain is Cytoplasmic. The chain crosses the membrane as a helical span at residues 385–405 (CLLWGAASMLCCFAVFASVGV). The Extracellular segment spans residues 406-429 (TKLWPQGSSHQDITSQGAGNCMIV). A helical membrane pass occupies residues 430–450 (FTMFFIFSFATTWAGGCYVIV). Residues 451–467 (SETFPLRVKSRGMAIAT) lie on the Cytoplasmic side of the membrane. A helical membrane pass occupies residues 468-488 (AANWMWGFLISFFTPFITGAI). A topological domain (extracellular) is located at residue Asn-489. The chain crosses the membrane as a helical span at residues 490–510 (FYYGYVFLGCLVFAYFYVFFF). The Cytoplasmic portion of the chain corresponds to 511-567 (VPETKGLTLEEVNTMWLEGVPAWKSASWVPPERRTADYDADAIDHDDRPIYKRFFSS).

The protein belongs to the major facilitator superfamily. Sugar transporter (TC 2.A.1.1) family.

It localises to the membrane. Probable glucose transporter. The chain is Hexose transporter HXT9 (HXT9) from Saccharomyces cerevisiae (strain ATCC 204508 / S288c) (Baker's yeast).